We begin with the raw amino-acid sequence, 61 residues long: Protein MATERNALLY EXPRESSED GENE 6 (61 aa).

Cysteine 38 and cysteine 60 are disulfide-bonded.

Belongs to the MEG family. Ubiquitous.

In Zea mays (Maize), this protein is Protein MATERNALLY EXPRESSED GENE 6 (MEG6).